Here is a 495-residue protein sequence, read N- to C-terminus: uncharacterized protein (495 aa).

Its subcellular location is the cytoplasm. It is found in the nucleus. This is an uncharacterized protein from Saccharomyces cerevisiae (strain ATCC 204508 / S288c) (Baker's yeast).